The following is a 214-amino-acid chain: Putative F-box protein At5g15670 (214 aa).

In terms of domain architecture, F-box spans 22 to 68 (RNKFDEIPHDLVIEILGRLPAKSVARFLTVSKLWATSIRSLDFIKSY).

The protein is Putative F-box protein At5g15670 of Arabidopsis thaliana (Mouse-ear cress).